A 208-amino-acid chain; its full sequence is MVSGRVQALLEQLRAQGIRDEQVLNALAAVPREKFIDEAFEHKAWENIALPIGQGQTISQPYMVARMTELLELTPQSRVLEIGTGSGYQTAILAHLVHHVCSVERIKGLQWQARRRLKQLDLHNVSTRHGDGWQGWQARAPFDAIIVTAAPPEIPTALMAQLDEGGILVLPVGDEQQFLKRVRRRGGEFIIDTVEAVRFVPLVKGELA.

The active site involves Ser-59.

It belongs to the methyltransferase superfamily. L-isoaspartyl/D-aspartyl protein methyltransferase family.

Its subcellular location is the cytoplasm. The catalysed reaction is [protein]-L-isoaspartate + S-adenosyl-L-methionine = [protein]-L-isoaspartate alpha-methyl ester + S-adenosyl-L-homocysteine. In terms of biological role, catalyzes the methyl esterification of L-isoaspartyl residues in peptides and proteins that result from spontaneous decomposition of normal L-aspartyl and L-asparaginyl residues. It plays a role in the repair and/or degradation of damaged proteins. This chain is Protein-L-isoaspartate O-methyltransferase, found in Salmonella newport (strain SL254).